Here is a 199-residue protein sequence, read N- to C-terminus: Elongation factor Ts (199 aa).

Positions Thr82–Val85 are involved in Mg(2+) ion dislocation from EF-Tu.

Belongs to the EF-Ts family.

Its subcellular location is the cytoplasm. Its function is as follows. Associates with the EF-Tu.GDP complex and induces the exchange of GDP to GTP. It remains bound to the aminoacyl-tRNA.EF-Tu.GTP complex up to the GTP hydrolysis stage on the ribosome. The polypeptide is Elongation factor Ts (Leptospira borgpetersenii serovar Hardjo-bovis (strain JB197)).